Consider the following 72-residue polypeptide: Osmotically-inducible lipoprotein B (72 aa).

An N-terminal signal peptide occupies residues 1–23 (MFVTSKKMTAAVLAITLAMSLSA). Cys-24 carries N-palmitoyl cysteine lipidation. Cys-24 is lipidated: S-diacylglycerol cysteine.

The protein localises to the cell membrane. Functionally, provides resistance to osmotic stress. May be important for stationary-phase survival. The polypeptide is Osmotically-inducible lipoprotein B (osmB) (Escherichia coli O157:H7).